A 430-amino-acid chain; its full sequence is Adenylosuccinate synthetase (430 aa).

GTP is bound by residues 12-18 (GDEGKGK) and 40-42 (GHT). The active-site Proton acceptor is the aspartate 13. Mg(2+) contacts are provided by aspartate 13 and glycine 40. Residues 13 to 16 (DEGK), 38 to 41 (NAGH), threonine 128, arginine 142, glutamine 223, threonine 238, and arginine 302 contribute to the IMP site. The Proton donor role is filled by histidine 41. Substrate is bound at residue 298 to 304 (TTTGRPR). Residues arginine 304, 330-332 (SID), and 412-414 (SVG) contribute to the GTP site.

This sequence belongs to the adenylosuccinate synthetase family. Homodimer. Mg(2+) is required as a cofactor.

It localises to the cytoplasm. It catalyses the reaction IMP + L-aspartate + GTP = N(6)-(1,2-dicarboxyethyl)-AMP + GDP + phosphate + 2 H(+). It participates in purine metabolism; AMP biosynthesis via de novo pathway; AMP from IMP: step 1/2. Its function is as follows. Plays an important role in the de novo pathway of purine nucleotide biosynthesis. Catalyzes the first committed step in the biosynthesis of AMP from IMP. The protein is Adenylosuccinate synthetase of Streptococcus agalactiae serotype Ia (strain ATCC 27591 / A909 / CDC SS700).